The sequence spans 760 residues: 5-methyltetrahydropteroyltriglutamate--homocysteine methyltransferase (760 aa).

5-methyltetrahydropteroyltri-L-glutamate is bound by residues 24 to 27 (RELK) and Lys-118. Residues 437–439 (IGS) and Glu-490 each bind L-homocysteine. L-methionine contacts are provided by residues 437-439 (IGS) and Glu-490. Residues 521–522 (RC) and Trp-567 each bind 5-methyltetrahydropteroyltri-L-glutamate. Position 605 (Asp-605) interacts with L-homocysteine. Residue Asp-605 coordinates L-methionine. Glu-611 provides a ligand contact to 5-methyltetrahydropteroyltri-L-glutamate. Positions 647, 649, and 671 each coordinate Zn(2+). Residue His-700 is the Proton donor of the active site. Residue Cys-732 coordinates Zn(2+).

Belongs to the vitamin-B12 independent methionine synthase family. Requires Zn(2+) as cofactor.

It carries out the reaction 5-methyltetrahydropteroyltri-L-glutamate + L-homocysteine = tetrahydropteroyltri-L-glutamate + L-methionine. The protein operates within amino-acid biosynthesis; L-methionine biosynthesis via de novo pathway; L-methionine from L-homocysteine (MetE route): step 1/1. Its function is as follows. Catalyzes the transfer of a methyl group from 5-methyltetrahydrofolate to homocysteine resulting in methionine formation. This chain is 5-methyltetrahydropteroyltriglutamate--homocysteine methyltransferase, found in Mycobacterium leprae (strain TN).